Here is a 259-residue protein sequence, read N- to C-terminus: Imidazole glycerol phosphate synthase subunit HisF (259 aa).

Active-site residues include D11 and D130.

It belongs to the HisA/HisF family. In terms of assembly, heterodimer of HisH and HisF.

The protein localises to the cytoplasm. It carries out the reaction 5-[(5-phospho-1-deoxy-D-ribulos-1-ylimino)methylamino]-1-(5-phospho-beta-D-ribosyl)imidazole-4-carboxamide + L-glutamine = D-erythro-1-(imidazol-4-yl)glycerol 3-phosphate + 5-amino-1-(5-phospho-beta-D-ribosyl)imidazole-4-carboxamide + L-glutamate + H(+). It participates in amino-acid biosynthesis; L-histidine biosynthesis; L-histidine from 5-phospho-alpha-D-ribose 1-diphosphate: step 5/9. Functionally, IGPS catalyzes the conversion of PRFAR and glutamine to IGP, AICAR and glutamate. The HisF subunit catalyzes the cyclization activity that produces IGP and AICAR from PRFAR using the ammonia provided by the HisH subunit. In Syntrophobacter fumaroxidans (strain DSM 10017 / MPOB), this protein is Imidazole glycerol phosphate synthase subunit HisF.